A 148-amino-acid chain; its full sequence is Endothelial differentiation-related factor 1 (148 aa).

An N-acetylalanine modification is found at Ala-2. Phosphoserine is present on Ser-4. Lys-25 carries the N6-methyllysine modification. The interval 34–67 (RGEDVETSKKWAAGQNKQHSITKNTAKLDRETEE) is disordered. An interaction with NR5A2, PPARG and NR1H3 region spans residues 37 to 113 (DVETSKKWAA…QVIADYESGR (77 aa)). The segment covering 48 to 58 (QNKQHSITKNT) has biased composition (polar residues). The interaction with TBP and NR5A1 stretch occupies residues 69–108 (HHDRVTLEVGKVIQRGRQSKGLTQKDLATKINEKPQVIAD). Residues 81–88 (IQRGRQSK) carry the IQ motif motif. Residues 81–135 (IQRGRQSKGLTQKDLATKINEKPQVIADYESGRAIPNNQVLGKIERAIGLKLRGK) form the HTH cro/C1-type domain. The H-T-H motif DNA-binding region spans 92–111 (QKDLATKINEKPQVIADYES).

In terms of assembly, interacts with TBP and the transcription factor IID (TFIID) complex, NR5A2, NR1H3 and PPARG. Interaction with TBP is regulated by phosphorylation. Binds NR5A1, ATF1, FOS and JUN via their conserved basic region. Binding to calmodulin is regulated by calcium and phosphorylation of the IQ motif. Phosphorylated. As to expression, expressed in brain, liver, kidney and heart (at protein level). Also expressed in testis.

The protein resides in the cytoplasm. It localises to the nucleus. In terms of biological role, transcriptional coactivator stimulating NR5A1 and ligand-dependent NR1H3/LXRA and PPARG transcriptional activities. Enhances the DNA-binding activity of ATF1, ATF2, CREB1 and NR5A1. Regulates nitric oxid synthase activity probably by sequestering calmodulin in the cytoplasm. Might function in endothelial cells differentiation, hormone-induced cardiomyocytes hypertrophy and lipid metabolism. This Mus musculus (Mouse) protein is Endothelial differentiation-related factor 1 (Edf1).